The following is a 367-amino-acid chain: Uroporphyrinogen decarboxylase (367 aa).

Residues 27–31, D77, Y157, T212, and H333 each bind substrate; that span reads RQAGR.

It belongs to the uroporphyrinogen decarboxylase family. Homodimer.

It is found in the cytoplasm. It carries out the reaction uroporphyrinogen III + 4 H(+) = coproporphyrinogen III + 4 CO2. It participates in porphyrin-containing compound metabolism; protoporphyrin-IX biosynthesis; coproporphyrinogen-III from 5-aminolevulinate: step 4/4. Catalyzes the decarboxylation of four acetate groups of uroporphyrinogen-III to yield coproporphyrinogen-III. This is Uroporphyrinogen decarboxylase from Cupriavidus metallidurans (strain ATCC 43123 / DSM 2839 / NBRC 102507 / CH34) (Ralstonia metallidurans).